The chain runs to 420 residues: Glutamate-1-semialdehyde 2,1-aminomutase (420 aa).

Lys259 carries the post-translational modification N6-(pyridoxal phosphate)lysine.

Belongs to the class-III pyridoxal-phosphate-dependent aminotransferase family. HemL subfamily. It depends on pyridoxal 5'-phosphate as a cofactor.

The protein resides in the cytoplasm. The catalysed reaction is (S)-4-amino-5-oxopentanoate = 5-aminolevulinate. It participates in porphyrin-containing compound metabolism; protoporphyrin-IX biosynthesis; 5-aminolevulinate from L-glutamyl-tRNA(Glu): step 2/2. The sequence is that of Glutamate-1-semialdehyde 2,1-aminomutase from Sulfolobus acidocaldarius (strain ATCC 33909 / DSM 639 / JCM 8929 / NBRC 15157 / NCIMB 11770).